Reading from the N-terminus, the 401-residue chain is Argininosuccinate synthase (401 aa).

8–16 serves as a coordination point for ATP; it reads AYSGGLDTS. An L-citrulline-binding site is contributed by Tyr85. Gly115 contacts ATP. Residues Thr117, Asn121, and Asp122 each coordinate L-aspartate. Asn121 contacts L-citrulline. Residues Arg125, Ser173, Glu258, and Tyr270 each contribute to the L-citrulline site.

It belongs to the argininosuccinate synthase family. Type 1 subfamily. As to quaternary structure, homotetramer.

It localises to the cytoplasm. The catalysed reaction is L-citrulline + L-aspartate + ATP = 2-(N(omega)-L-arginino)succinate + AMP + diphosphate + H(+). It participates in amino-acid biosynthesis; L-arginine biosynthesis; L-arginine from L-ornithine and carbamoyl phosphate: step 2/3. This chain is Argininosuccinate synthase, found in Staphylococcus carnosus (strain TM300).